The sequence spans 292 residues: Protease HtpX homolog (292 aa).

Transmembrane regions (helical) follow at residues 4–24 (ILLFVLTNLAVVLVLGVVASL) and 39–59 (GALLGFALVMGFGGAFISLLI). His-144 contributes to the Zn(2+) binding site. Glu-145 is a catalytic residue. His-148 contacts Zn(2+). A run of 2 helical transmembrane segments spans residues 159-179 (LIQGVMNTFVVFLSRVIGYAV) and 199-219 (VTTIVLDIALGFVAAIIVAWF). Residue Glu-224 coordinates Zn(2+).

This sequence belongs to the peptidase M48B family. Zn(2+) is required as a cofactor.

It localises to the cell inner membrane. In Verminephrobacter eiseniae (strain EF01-2), this protein is Protease HtpX homolog.